We begin with the raw amino-acid sequence, 590 residues long: V-type ATP synthase alpha chain (590 aa).

Residue 232–239 participates in ATP binding; it reads GPFGSGKT.

Belongs to the ATPase alpha/beta chains family.

It carries out the reaction ATP + H2O + 4 H(+)(in) = ADP + phosphate + 5 H(+)(out). Produces ATP from ADP in the presence of a proton gradient across the membrane. The V-type alpha chain is a catalytic subunit. This chain is V-type ATP synthase alpha chain, found in Thermoanaerobacter pseudethanolicus (strain ATCC 33223 / 39E) (Clostridium thermohydrosulfuricum).